Reading from the N-terminus, the 215-residue chain is Rho-related GTP-binding protein RhoF (215 aa).

Residue Met1 is modified to N-acetylmethionine. Position 30-37 (30-37 (GDGGCGKT)) interacts with GTP. An Effector region motif is present at residues 52–60 (YAPSVFEKY). GTP-binding positions include 77-81 (DTAGQ) and 135-138 (CKTD). Cysteine methyl ester is present on Cys212. Cys212 carries S-geranylgeranyl cysteine lipidation. The propeptide at 213–215 (LLL) is removed in mature form.

Belongs to the small GTPase superfamily. Rho family.

It localises to the cell membrane. The protein resides in the cytoplasm. Its subcellular location is the cytoskeleton. Plasma membrane-associated small GTPase which cycles between an active GTP-bound and an inactive GDP-bound state. Causes the formation of thin, actin-rich surface projections called filopodia. Functions cooperatively with CDC42 and Rac to generate additional structures, increasing the diversity of actin-based morphology. This chain is Rho-related GTP-binding protein RhoF (RHOF), found in Bos taurus (Bovine).